The following is a 173-amino-acid chain: Adenine phosphoribosyltransferase (173 aa).

Belongs to the purine/pyrimidine phosphoribosyltransferase family. In terms of assembly, homodimer.

The protein resides in the cytoplasm. The catalysed reaction is AMP + diphosphate = 5-phospho-alpha-D-ribose 1-diphosphate + adenine. It functions in the pathway purine metabolism; AMP biosynthesis via salvage pathway; AMP from adenine: step 1/1. Catalyzes a salvage reaction resulting in the formation of AMP, that is energically less costly than de novo synthesis. The sequence is that of Adenine phosphoribosyltransferase from Ureaplasma parvum serovar 3 (strain ATCC 27815 / 27 / NCTC 11736).